Consider the following 307-residue polypeptide: UDP-3-O-acyl-N-acetylglucosamine deacetylase (307 aa).

Zn(2+) is bound by residues His78, His237, and Asp241. His264 (proton donor) is an active-site residue.

This sequence belongs to the LpxC family. The cofactor is Zn(2+).

The catalysed reaction is a UDP-3-O-[(3R)-3-hydroxyacyl]-N-acetyl-alpha-D-glucosamine + H2O = a UDP-3-O-[(3R)-3-hydroxyacyl]-alpha-D-glucosamine + acetate. The protein operates within glycolipid biosynthesis; lipid IV(A) biosynthesis; lipid IV(A) from (3R)-3-hydroxytetradecanoyl-[acyl-carrier-protein] and UDP-N-acetyl-alpha-D-glucosamine: step 2/6. In terms of biological role, catalyzes the hydrolysis of UDP-3-O-myristoyl-N-acetylglucosamine to form UDP-3-O-myristoylglucosamine and acetate, the committed step in lipid A biosynthesis. In Azoarcus sp. (strain BH72), this protein is UDP-3-O-acyl-N-acetylglucosamine deacetylase.